A 419-amino-acid polypeptide reads, in one-letter code: Variant surface glycoprotein YnAT 1.1 (419 aa).

The first 28 residues, 1–28 (MKRVLSNVLKAWIFTIVAFHNFSTSVTA), serve as a signal peptide directing secretion. 2 N-linked (GlcNAc...) asparagine glycosylation sites follow: N82 and N358. Residues 369–405 (ESSRPPSTDANTSQKGPLQRPEKSGESSHLPSGSSHG) form a disordered region. A compositionally biased stretch (polar residues) spans 372 to 384 (RPPSTDANTSQKG). N379 is a glycosylation site (N-linked (GlcNAc...) (high mannose) asparagine). Over residues 395–405 (SSHLPSGSSHG) the composition is skewed to low complexity. The GPI-anchor amidated serine moiety is linked to residue S400. Positions 401–419 (GSSHGTKAIRSILHVALLM) are cleaved as a propeptide — removed in mature form.

It is found in the cell membrane. Functionally, VSG forms a coat on the surface of the parasite. The trypanosome evades the immune response of the host by expressing a series of antigenically distinct VSGs from an estimated 1000 VSG genes. This Trypanosoma congolense protein is Variant surface glycoprotein YnAT 1.1.